The primary structure comprises 314 residues: Putative S-adenosyl-L-methionine-dependent methyltransferase MAV_0301 (314 aa).

S-adenosyl-L-methionine-binding positions include Asp132 and 161 to 162 (DL).

The protein belongs to the UPF0677 family.

Functionally, exhibits S-adenosyl-L-methionine-dependent methyltransferase activity. The chain is Putative S-adenosyl-L-methionine-dependent methyltransferase MAV_0301 from Mycobacterium avium (strain 104).